The chain runs to 554 residues: MRSKKMTHGLEKAPHRSLLHALGLTREELARPLVGVVNAANEVVPGHIHLDDIAEAVKAGVRAAGGTPLEFPAIAVCDGLAMNHEGMRFSLPSRELIADSIEIMATAHPFDALVFIPNCDKSVPGMLMAMLRLDVPSVMVSGGPMLAGATLAGRADLITVFEGVGRVQRGDMTEAELDELVEGACPGCGSCAGMFTANSMNCLAETIGLALPGNGTTPAVTAARIRLAKHAGMKVMEMLERNIRPRDIVTEKAVANAVAVDMALGCSTNTVLHLPAVFAEAGLDLTLDIFDKVSRKTPNLCKLSPAGHHHIQDLHAAGGIPAVMAELDRIGLIDRSAMTVTGRTVGENLDALGAKVRDADVIRPVDAPYSPQGGIAILKGSLAPGGAVVKQSAVAPEMMVREAVARVFDSEEAACEAIMGGRIKAGDAIVIRYEGPKGGPGMREMLTPTSAIAGMGLGADVALITDGRFSGGTRGAAIGHVSPEAAEGGPIGLVQEGDRIRIDIPARALDLLVDEDELARRRAAFVPVEKEITSPLLRRYARMVSSAATGARQR.

Position 78 (D78) interacts with Mg(2+). Position 119 (C119) interacts with [2Fe-2S] cluster. Positions 120 and 121 each coordinate Mg(2+). The residue at position 121 (K121) is an N6-carboxylysine. C191 is a [2Fe-2S] cluster binding site. Residue E444 coordinates Mg(2+). Catalysis depends on S470, which acts as the Proton acceptor.

The protein belongs to the IlvD/Edd family. Homodimer. [2Fe-2S] cluster serves as cofactor. The cofactor is Mg(2+).

The enzyme catalyses (2R)-2,3-dihydroxy-3-methylbutanoate = 3-methyl-2-oxobutanoate + H2O. It carries out the reaction (2R,3R)-2,3-dihydroxy-3-methylpentanoate = (S)-3-methyl-2-oxopentanoate + H2O. It participates in amino-acid biosynthesis; L-isoleucine biosynthesis; L-isoleucine from 2-oxobutanoate: step 3/4. It functions in the pathway amino-acid biosynthesis; L-valine biosynthesis; L-valine from pyruvate: step 3/4. Functions in the biosynthesis of branched-chain amino acids. Catalyzes the dehydration of (2R,3R)-2,3-dihydroxy-3-methylpentanoate (2,3-dihydroxy-3-methylvalerate) into 2-oxo-3-methylpentanoate (2-oxo-3-methylvalerate) and of (2R)-2,3-dihydroxy-3-methylbutanoate (2,3-dihydroxyisovalerate) into 2-oxo-3-methylbutanoate (2-oxoisovalerate), the penultimate precursor to L-isoleucine and L-valine, respectively. The polypeptide is Dihydroxy-acid dehydratase (Nitratidesulfovibrio vulgaris (strain ATCC 29579 / DSM 644 / CCUG 34227 / NCIMB 8303 / VKM B-1760 / Hildenborough) (Desulfovibrio vulgaris)).